A 210-amino-acid chain; its full sequence is Fimbriae Z protein (210 aa).

Positions 5–121 constitute a Response regulatory domain; it reads SVIIMDEHPI…DIYNAVKMIL (117 aa). Aspartate 56 carries the post-translational modification 4-aspartylphosphate. The region spanning 143-208 is the HTH luxR-type domain; it reads GGHHDMPLSN…ELIDYAKSHE (66 aa). The H-T-H motif DNA-binding region spans 167–186; sequence NKEIAEQLLLSNKTISAHKA.

It localises to the cytoplasm. The sequence is that of Fimbriae Z protein (fimZ) from Salmonella typhimurium (strain LT2 / SGSC1412 / ATCC 700720).